The chain runs to 1233 residues: STE20-like serine/threonine-protein kinase (1233 aa).

The residue at position 14 (serine 14) is a Phosphoserine. The Protein kinase domain maps to tryptophan 34 to valine 292. Residues leucine 40–valine 48 and lysine 63 each bind ATP. Aspartate 155 serves as the catalytic Proton acceptor. Threonine 183 is modified (phosphothreonine). At serine 189 the chain carries Phosphoserine. The segment at alanine 309–aspartate 351 is disordered. Over residues threonine 312–glutamate 328 the composition is skewed to acidic residues. Phosphoserine is present on residues serine 340, serine 341, serine 344, serine 347, serine 348, serine 354, and serine 372. Residues valine 363–serine 399 show a composition bias toward basic and acidic residues. Disordered stretches follow at residues valine 363–arginine 453, valine 498–glutamate 650, alanine 663–leucine 761, and alanine 772–lysine 791. Residues proline 432–aspartate 441 show a composition bias toward polar residues. The segment covering leucine 518–lysine 529 has biased composition (basic and acidic residues). Residues serine 543, serine 561, and serine 566 each carry the phosphoserine modification. Residues glycine 598–proline 607 are compositionally biased toward basic and acidic residues. Positions glutamine 619–threonine 630 are enriched in polar residues. Phosphoserine occurs at positions 643, 647, and 666. Low complexity predominate over residues alanine 690–serine 701. Polar residues predominate over residues threonine 746 to leucine 761. Serine 775 and serine 777 each carry phosphoserine. The residue at position 812 (threonine 812) is a Phosphothreonine. Serine 816 bears the Phosphoserine mark. Positions leucine 824–alanine 1067 form a coiled coil. The region spanning aspartate 873–glutamate 908 is the UVR domain. The tract at residues lysine 944 to glutamine 963 is disordered. The span at glutamine 954–glutamine 963 shows a compositional bias: low complexity. Threonine 1095 carries the phosphothreonine modification. Positions alanine 1107 to arginine 1181 form a coiled coil. Residues glutamine 1109 to methionine 1129 form a disordered region.

Belongs to the protein kinase superfamily. STE Ser/Thr protein kinase family. STE20 subfamily. Proteolytically cleaved by caspase-3. Post-translationally, autophosphorylated. In terms of tissue distribution, ubiquitously expressed.

Its subcellular location is the cytoplasm. The enzyme catalyses L-seryl-[protein] + ATP = O-phospho-L-seryl-[protein] + ADP + H(+). It carries out the reaction L-threonyl-[protein] + ATP = O-phospho-L-threonyl-[protein] + ADP + H(+). Mediates apoptosis and actin stress fiber dissolution. The polypeptide is STE20-like serine/threonine-protein kinase (Slk) (Mus musculus (Mouse)).